A 502-amino-acid chain; its full sequence is Probable malate:quinone oxidoreductase (502 aa).

Belongs to the MQO family. Requires FAD as cofactor.

The enzyme catalyses (S)-malate + a quinone = a quinol + oxaloacetate. It functions in the pathway carbohydrate metabolism; tricarboxylic acid cycle; oxaloacetate from (S)-malate (quinone route): step 1/1. In Synechococcus sp. (strain CC9902), this protein is Probable malate:quinone oxidoreductase.